A 146-amino-acid chain; its full sequence is Cytidine deaminase (146 aa).

Positions Glu13–Glu140 constitute a CMP/dCMP-type deaminase domain. Asn54–Tyr60 contributes to the substrate binding site. Cys65 contacts Zn(2+). Glu67 acts as the Proton donor in catalysis. Positions 99 and 102 each coordinate Zn(2+).

The protein belongs to the cytidine and deoxycytidylate deaminase family. In terms of assembly, homotetramer. It depends on Zn(2+) as a cofactor. In terms of tissue distribution, highly expressed in granulocytes while expression is very low in fibroblasts, chondrocytes, monocytes, and T- as well as B-cell lines.

The enzyme catalyses cytidine + H2O + H(+) = uridine + NH4(+). It carries out the reaction 2'-deoxycytidine + H2O + H(+) = 2'-deoxyuridine + NH4(+). In terms of biological role, this enzyme scavenges exogenous and endogenous cytidine and 2'-deoxycytidine for UMP synthesis. This Homo sapiens (Human) protein is Cytidine deaminase.